The chain runs to 156 residues: Small ribosomal subunit protein uS7 (156 aa).

Belongs to the universal ribosomal protein uS7 family. As to quaternary structure, part of the 30S ribosomal subunit. Contacts proteins S9 and S11.

Its function is as follows. One of the primary rRNA binding proteins, it binds directly to 16S rRNA where it nucleates assembly of the head domain of the 30S subunit. Is located at the subunit interface close to the decoding center, probably blocks exit of the E-site tRNA. This is Small ribosomal subunit protein uS7 from Mycoplasmopsis pulmonis (strain UAB CTIP) (Mycoplasma pulmonis).